A 398-amino-acid polypeptide reads, in one-letter code: Phosphoglycerate kinase (398 aa).

Substrate-binding positions include 23 to 25, R38, 61 to 64, R119, and R152; these read DLN and HFGR. Residues K202, E324, and 354 to 357 each bind ATP; that span reads GGDT.

The protein belongs to the phosphoglycerate kinase family. As to quaternary structure, monomer.

Its subcellular location is the cytoplasm. The enzyme catalyses (2R)-3-phosphoglycerate + ATP = (2R)-3-phospho-glyceroyl phosphate + ADP. Its pathway is carbohydrate degradation; glycolysis; pyruvate from D-glyceraldehyde 3-phosphate: step 2/5. The polypeptide is Phosphoglycerate kinase (Rhodopseudomonas palustris (strain ATCC BAA-98 / CGA009)).